Reading from the N-terminus, the 295-residue chain is Ethanolamine ammonia-lyase small subunit (295 aa).

Adenosylcob(III)alamin is bound by residues valine 207, glutamate 228, and cysteine 258.

This sequence belongs to the EutC family. As to quaternary structure, the basic unit is a heterodimer which dimerizes to form tetramers. The heterotetramers trimerize; 6 large subunits form a core ring with 6 small subunits projecting outwards. Requires adenosylcob(III)alamin as cofactor.

It localises to the bacterial microcompartment. It carries out the reaction ethanolamine = acetaldehyde + NH4(+). It participates in amine and polyamine degradation; ethanolamine degradation. Its function is as follows. Catalyzes the deamination of various vicinal amino-alcohols to oxo compounds. Allows this organism to utilize ethanolamine as the sole source of nitrogen and carbon in the presence of external vitamin B12. The polypeptide is Ethanolamine ammonia-lyase small subunit (Shigella sonnei (strain Ss046)).